Here is a 304-residue protein sequence, read N- to C-terminus: Ribonuclease Z (304 aa).

Residues histidine 63, histidine 65, aspartate 67, histidine 68, histidine 143, aspartate 213, and histidine 271 each coordinate Zn(2+). The active-site Proton acceptor is aspartate 67.

The protein belongs to the RNase Z family. In terms of assembly, homodimer. Zn(2+) is required as a cofactor.

It carries out the reaction Endonucleolytic cleavage of RNA, removing extra 3' nucleotides from tRNA precursor, generating 3' termini of tRNAs. A 3'-hydroxy group is left at the tRNA terminus and a 5'-phosphoryl group is left at the trailer molecule.. Zinc phosphodiesterase, which displays some tRNA 3'-processing endonuclease activity. Probably involved in tRNA maturation, by removing a 3'-trailer from precursor tRNA. In Bacteroides fragilis (strain ATCC 25285 / DSM 2151 / CCUG 4856 / JCM 11019 / LMG 10263 / NCTC 9343 / Onslow / VPI 2553 / EN-2), this protein is Ribonuclease Z.